A 380-amino-acid chain; its full sequence is Cobalt-precorrin-5B C(1)-methyltransferase (380 aa).

This sequence belongs to the CbiD family.

It carries out the reaction Co-precorrin-5B + S-adenosyl-L-methionine = Co-precorrin-6A + S-adenosyl-L-homocysteine. Its pathway is cofactor biosynthesis; adenosylcobalamin biosynthesis; cob(II)yrinate a,c-diamide from sirohydrochlorin (anaerobic route): step 6/10. Catalyzes the methylation of C-1 in cobalt-precorrin-5B to form cobalt-precorrin-6A. The chain is Cobalt-precorrin-5B C(1)-methyltransferase from Salinispora arenicola (strain CNS-205).